Reading from the N-terminus, the 864-residue chain is Xylosyltransferase 2 (864 aa).

Over 1 to 15 the chain is Cytoplasmic; it reads MVASARVQKLVRRYK. The chain crosses the membrane as a helical; Signal-anchor for type II membrane protein span at residues 16–36; that stretch reads LAIATALAILLLQGLVVWSFS. Residues 37–864 are Lumenal-facing; it reads GLEEDEPGEK…GPVKADGRLR (828 aa). Disordered regions lie at residues 39 to 123 and 136 to 158; these read EEDE…RQNL and AGFP…DNSF. Residues 53–65 are compositionally biased toward basic and acidic residues; that stretch reads RPLDPGEGSKDTD. The segment covering 73 to 82 has biased composition (basic residues); that stretch reads SAGRRHGRWR. The N-linked (GlcNAc...) asparagine glycan is linked to asparagine 122. 4 cysteine pairs are disulfide-bonded: cysteine 162–cysteine 190, cysteine 206–cysteine 448, cysteine 467–cysteine 480, and cysteine 469–cysteine 478. UDP-alpha-D-xylose is bound by residues valine 239, aspartate 267, and 296–298; that span reads TIW. Asparagine 327 carries N-linked (GlcNAc...) asparagine glycosylation. Position 400–401 (400–401) interacts with UDP-alpha-D-xylose; the sequence is DW. UDP-alpha-D-xylose is bound by residues serine 481 and 504 to 505; that span reads RK. 2 cysteine pairs are disulfide-bonded: cysteine 580-cysteine 832 and cysteine 825-cysteine 838. A glycan (N-linked (GlcNAc...) asparagine) is linked at asparagine 682.

The protein belongs to the glycosyltransferase 14 family. XylT subfamily. In terms of assembly, monomer. Mg(2+) is required as a cofactor. It depends on Mn(2+) as a cofactor. Post-translationally, contains disulfide bonds.

It localises to the golgi apparatus membrane. The protein resides in the secreted. It carries out the reaction UDP-alpha-D-xylose + L-seryl-[protein] = 3-O-(beta-D-xylosyl)-L-seryl-[protein] + UDP + H(+). It functions in the pathway glycan metabolism; chondroitin sulfate biosynthesis. The protein operates within glycan metabolism; heparan sulfate biosynthesis. Its function is as follows. Catalyzes the first step in the biosynthesis of chondroitin sulfate, heparan sulfate and dermatan sulfate proteoglycans, such as DCN. Transfers D-xylose from UDP-D-xylose to specific serine residues of the core protein. The sequence is that of Xylosyltransferase 2 (Xylt2) from Rattus norvegicus (Rat).